The sequence spans 504 residues: Endochitinase (504 aa).

The signal sequence occupies residues 1 to 22 (MNRTTLILFFIILSNTITVIHG). A GH18 domain is found at 23-392 (YVRGCYYTNW…NAISSELEGE (370 aa)). Cysteine 27 and cysteine 52 are joined by a disulfide. Chitin is bound by residues 78–79 (TE) and 105–108 (GGYN). Glutamate 148 acts as the Proton donor in catalysis. Residues tyrosine 149, 212–215 (MSYD), and tryptophan 362 contribute to the chitin site. The tract at residues 389–450 (LEGESENPEI…YDTDETEGQE (62 aa)) is disordered. Residues 396-408 (PEITTEEPSITET) show a composition bias toward low complexity. 2 tandem repeats follow at residues 407–420 (ETEA…EETS) and 421–434 (ETEA…EETS). A 3 X 14 AA approximate tandem repeats of E-T-E-A-Y-[ED]-T-D-E-T-E-E-T-S region spans residues 407–448 (ETEAYETDETEETSETEAYDTDETEETSETEATTYDTDETEG). The segment covering 409–435 (EAYETDETEETSETEAYDTDETEETSE) has biased composition (acidic residues). The stretch at 435 to 448 (ETEATTYDTDETEG) is one 3; approximate repeat. Residues 448 to 504 (GQECPERDGLFPHPTDCHLFIQCANNIAYVMQCPATTFFNDAIKVCDHMTNAPDTCI) enclose the Chitin-binding type-2 domain. The cysteines at positions 480 and 493 are disulfide-linked.

This sequence belongs to the glycosyl hydrolase 18 family. Chitinase class II subfamily. O-glycosylated.

The enzyme catalyses Random endo-hydrolysis of N-acetyl-beta-D-glucosaminide (1-&gt;4)-beta-linkages in chitin and chitodextrins.. Functionally, microfilarial chitinase, which may function to degrade chitin-containing structures in the micro-filaria or in its mosquito vector during parasite development and transmission. This Brugia malayi (Filarial nematode worm) protein is Endochitinase.